The sequence spans 310 residues: Protein TIFY 6A (310 aa).

A Tify domain is found at 141 to 176; the sequence is SKPLPPQLTIFYAGSVLVYQDIAPEKAQAIMLLAGN. The Jas motif lies at 259 to 284; the sequence is PQTRKASLARFLEKRKERVINVSPYY. The Nuclear localization signal motif lies at 261–268; that stretch reads TRKASLAR.

Belongs to the TIFY/JAZ family. In terms of assembly, homo- and heterodimer. Interacts with MYC2, AFPH2/NINJA, TIFY10A/JAZ1, TIFY6B/JAZ3, TIFY5A/JAZ8, TIFY9/JAZ10 and TIFY3A/JAZ11. Interacts with RHD6 and RSL1. Ubiquitinated. Targeted for degradation by the SCF(COI1) E3 ubiquitin ligase-proteasome pathway during jasmonate signaling.

It is found in the nucleus. Its function is as follows. Repressor of jasmonate responses. Interacts with and suppresses RHD6 and RSL1 transcription factor activities to negatively regulate jasmonate-stimulated root hair development. The protein is Protein TIFY 6A (TIFY6A) of Arabidopsis thaliana (Mouse-ear cress).